A 283-amino-acid chain; its full sequence is Elongation factor Ts (283 aa).

The tract at residues 80 to 83 (TDFV) is involved in Mg(2+) ion dislocation from EF-Tu.

Belongs to the EF-Ts family.

It localises to the cytoplasm. Its function is as follows. Associates with the EF-Tu.GDP complex and induces the exchange of GDP to GTP. It remains bound to the aminoacyl-tRNA.EF-Tu.GTP complex up to the GTP hydrolysis stage on the ribosome. The polypeptide is Elongation factor Ts (Histophilus somni (strain 129Pt) (Haemophilus somnus)).